Reading from the N-terminus, the 95-residue chain is Probable FAD-linked sulfhydryl oxidase OPG072 (95 aa).

Residues 1-8 are Intravirion-facing; the sequence is MNPKHWGR. The region spanning 1-95 is the ERV/ALR sulfhydryl oxidase domain; the sequence is MNPKHWGRAV…AIDVTKVNPL (95 aa). A helical transmembrane segment spans residues 9 to 25; sequence AVWTIIFIVLSQAGLDG. Over 26–95 the chain is Virion surface; the sequence is NIEACKRKLY…AIDVTKVNPL (70 aa). A disulfide bridge connects residues Cys-43 and Cys-46.

It belongs to the orthopoxvirus OPG072 family. Interacts with OPG128/A2.5; this interaction involves formation of a transient disulfide-bonded intermediate, allowing disulfide bond transfer. The cofactor is FAD.

The protein localises to the virion membrane. Its subcellular location is the host cytoplasm. The enzyme catalyses 2 R'C(R)SH + O2 = R'C(R)S-S(R)CR' + H2O2. FAD-dependent sulfhydryl oxidase that catalyzes disulfide bond formation. The complete pathway for formation of disulfide bonds in intracellular virion membrane proteins sequentially involves thiol-disulfide transfer between OPG072/E10, OPG128/A2.5 and OPG088/G4. The sequence is that of Probable FAD-linked sulfhydryl oxidase OPG072 (OPG072) from Bos taurus (Bovine).